The sequence spans 172 residues: Centrin-2 (172 aa).

The segment at 1-31 (MASNFKKANMASTTQRKRMSPKPELTEEQKQ) is disordered. At alanine 2 the chain carries N-acetylalanine. Residues 2–25 (ASNFKKANMASTTQRKRMSPKPEL) form a required for self-assembly region. A Phosphoserine modification is found at serine 20. A Glycyl lysine isopeptide (Lys-Gly) (interchain with G-Cter in SUMO2) cross-link involves residue lysine 22. Threonine 26 bears the Phosphothreonine mark. 4 consecutive EF-hand domains span residues 28–63 (EQKQ…LGFE), 64–99 (PKKE…KMSE), 101–136 (DTKE…LGEN), and 137–172 (LSDE…TSLY). Residues aspartate 41, aspartate 43, threonine 45, threonine 47, and glutamate 52 each contribute to the Ca(2+) site. Residues aspartate 150, aspartate 152, aspartate 154, glutamate 156, and glutamate 161 each coordinate Ca(2+).

Belongs to the centrin family. As to quaternary structure, monomer. Homooligomer. Interacts with CCP110, SFI1. Component of the XPC complex composed of XPC, RAD23B and CETN2. Component of the nuclear pore complex (NPC)-associated TREX-2 complex (transcription and export complex 2), composed of at least GANP, 2 copies of ENY2, PCID2, SEM1/DSS1, and either centrin CETN2 or centrin CETN3. The TREX-2 complex also associates with ALYREF/ALY and with the nucleoporin NUP153. Interacts with USP49. Forms a microtubule-associated complex with POC5, POC1B and FAM161A. Interacts with CCDC15.

The protein resides in the cytoplasm. It localises to the cytoskeleton. It is found in the microtubule organizing center. Its subcellular location is the centrosome. The protein localises to the centriole. The protein resides in the nucleus. It localises to the nucleus envelope. It is found in the nuclear pore complex. Functionally, plays a fundamental role in microtubule organizing center structure and function. Required for centriole duplication and correct spindle formation. Has a role in regulating cytokinesis and genome stability via cooperation with CALM1 and CCP110. In terms of biological role, involved in global genome nucleotide excision repair (GG-NER) by acting as component of the XPC complex. Cooperatively with RAD23B appears to stabilize XPC. In vitro, stimulates DNA binding of the XPC:RAD23B dimer. Its function is as follows. The XPC complex is proposed to represent the first factor bound at the sites of DNA damage and together with other core recognition factors, XPA, RPA and the TFIIH complex, is part of the pre-incision (or initial recognition) complex. The XPC complex recognizes a wide spectrum of damaged DNA characterized by distortions of the DNA helix such as single-stranded loops, mismatched bubbles or single-stranded overhangs. The orientation of XPC complex binding appears to be crucial for inducing a productive NER. XPC complex is proposed to recognize and to interact with unpaired bases on the undamaged DNA strand which is followed by recruitment of the TFIIH complex and subsequent scanning for lesions in the opposite strand in a 5'-to-3' direction by the NER machinery. Cyclobutane pyrimidine dimers (CPDs) which are formed upon UV-induced DNA damage esacpe detection by the XPC complex due to a low degree of structural perurbation. Instead they are detected by the UV-DDB complex which in turn recruits and cooperates with the XPC complex in the respective DNA repair. As a component of the TREX-2 complex, involved in the export of mRNAs to the cytoplasm through the nuclear pores. This is Centrin-2 (CETN2) from Bos taurus (Bovine).